We begin with the raw amino-acid sequence, 301 residues long: tRNA pseudouridine synthase B (301 aa).

Aspartate 45 acts as the Nucleophile in catalysis.

The protein belongs to the pseudouridine synthase TruB family. Type 1 subfamily.

It catalyses the reaction uridine(55) in tRNA = pseudouridine(55) in tRNA. Functionally, responsible for synthesis of pseudouridine from uracil-55 in the psi GC loop of transfer RNAs. The polypeptide is tRNA pseudouridine synthase B (Streptomyces coelicolor (strain ATCC BAA-471 / A3(2) / M145)).